Consider the following 670-residue polypeptide: Probable E3 ubiquitin ligase complex SCF subunit sconB (670 aa).

Residues 1–38 are disordered; it reads MSSPPPFTSIFGGPAESAEEIDADADNSQLKPHNRSNV. A compositionally biased stretch (polar residues) spans 27 to 38; that stretch reads NSQLKPHNRSNV. An F-box domain is found at 163 to 209; it reads IDFIAALPPEISFKILCYLDTTSLCKAAQVSRRWRALADDDVVWHRM. The disordered stretch occupies residues 249-287; it reads VNGTSPKATPALPEDASPVADSSGTGKRKPEPSEEETAV. WD repeat units lie at residues 339 to 376, 379 to 418, 420 to 456, 458 to 499, 553 to 596, 599 to 636, and 639 to 670; these read GHTN…EIRT, GHES…STYT, HRGG…TCLL, GHTD…RTFH, ISQS…CLRT, GHLE…CERT, and GHSG…SFQS.

Belongs to the WD repeat MET30/SCONB/SCON-2 family. Component of the SCF(sconB) E3 ubiquitin ligase complex.

It functions in the pathway protein modification; protein ubiquitination. Its function is as follows. Component of the SCF(sconB) E3 ubiquitin ligase complex involved in the regulation of sulfur metabolite repression, probably by mediating the inactivation or degradation of the metR transcription factor. This chain is Probable E3 ubiquitin ligase complex SCF subunit sconB (sconB), found in Aspergillus niger (strain ATCC MYA-4892 / CBS 513.88 / FGSC A1513).